Here is a 41-residue protein sequence, read N- to C-terminus: Bacteriocin (41 aa).

Cysteines 9 and 14 form a disulfide.

The protein localises to the secreted. Functionally, bacteriocin active against S.aureus, S.typhi, B.thuringiensis, Klebsiella sp., E.coli KL16 and E.coli Gj137. The protein is Bacteriocin of Lactococcus sp.